A 140-amino-acid polypeptide reads, in one-letter code: uncharacterized protein (140 aa).

This is an uncharacterized protein from Saccharomyces cerevisiae (strain ATCC 204508 / S288c) (Baker's yeast).